The chain runs to 509 residues: Cytochrome P450 monooxygenase ARMGADRAFT_974139 (509 aa).

A helical transmembrane segment spans residues 4–24 (ASLAVVVWAILLVLWLRRIFG). N-linked (GlcNAc...) asparagine glycans are attached at residues Asn96 and Asn279. A heme-binding site is contributed by Cys439.

It belongs to the cytochrome P450 family. Requires heme as cofactor.

The protein localises to the membrane. It participates in secondary metabolite biosynthesis. In terms of biological role, cytochrome P450 monooxygenase, part of the gene cluster that mediates the biosynthesis of melleolides, a range of antifungal and phytotoxic polyketide derivatives composed of an orsellinic acid (OA) moiety esterified to various sesquiterpene alcohols. The first step in melleolides biosynthesis is performed by the delta(6)-protoilludene synthase PRO1 which catalyzes the cyclization of farnesyl diphosphate to protoilludene. The orsellinic acid synthase armB produces OA by condensing acetyl-CoA with 3 malonyl-CoA units in a three-round chain elongation reaction folowed by a C2-C7 ring closure. ArmB further catalyzes the trans-esterification of OA to the various sesquiterpene alcohols resulting from the hydroxylation of protoilludene. The melleolides cluster also includes 5 cytochrome P450 monooxygenases, 4 NAD(+)-dependent oxidoreductases, one flavin-dependent oxidoreductase, and one O-methyltransferase. The cytochrome P450 monooxygenases may be involved in protoilludene hydroxylation to elaborate melleolides with multiple alcohol groups, such as melleolide D, which carries alcohol functionalities at C-4, C-5, C-10, and C-13. The role of the NAD(+)-dependent enzymes remains unknown. Numerous melleolides, including arnamial, show 5'-O-methylation of the aromatic moiety which may be catalyzed by the methyltransferase encoded in the cluster. The flavin-dependent oxidoreductase might represent the dehydrogenase yielding the aldehyde in position 1 of arnamial and other melleolides. Finally, several halogenase localized outside of the cluster, are able to catalyze the transfer of a single chlorine atom to the melleolide backbone, resulting in a 6'-chloromelleolide product. The chain is Cytochrome P450 monooxygenase ARMGADRAFT_974139 from Armillaria gallica (Bulbous honey fungus).